Reading from the N-terminus, the 322-residue chain is Lipoyl synthase (322 aa).

Residues 1 to 24 (MVTVLDTVSKPRPRHPEKAHRPDQ) are disordered. Positions 14 to 24 (RHPEKAHRPDQ) are enriched in basic and acidic residues. Residues cysteine 59, cysteine 64, cysteine 70, cysteine 85, cysteine 89, cysteine 92, and serine 298 each coordinate [4Fe-4S] cluster. One can recognise a Radical SAM core domain in the interval 71-287 (WDKKHATFMI…ETIAYTKGFL (217 aa)).

The protein belongs to the radical SAM superfamily. Lipoyl synthase family. It depends on [4Fe-4S] cluster as a cofactor.

It is found in the cytoplasm. It carries out the reaction [[Fe-S] cluster scaffold protein carrying a second [4Fe-4S](2+) cluster] + N(6)-octanoyl-L-lysyl-[protein] + 2 oxidized [2Fe-2S]-[ferredoxin] + 2 S-adenosyl-L-methionine + 4 H(+) = [[Fe-S] cluster scaffold protein] + N(6)-[(R)-dihydrolipoyl]-L-lysyl-[protein] + 4 Fe(3+) + 2 hydrogen sulfide + 2 5'-deoxyadenosine + 2 L-methionine + 2 reduced [2Fe-2S]-[ferredoxin]. It participates in protein modification; protein lipoylation via endogenous pathway; protein N(6)-(lipoyl)lysine from octanoyl-[acyl-carrier-protein]: step 2/2. Functionally, catalyzes the radical-mediated insertion of two sulfur atoms into the C-6 and C-8 positions of the octanoyl moiety bound to the lipoyl domains of lipoate-dependent enzymes, thereby converting the octanoylated domains into lipoylated derivatives. The sequence is that of Lipoyl synthase from Chelativorans sp. (strain BNC1).